We begin with the raw amino-acid sequence, 693 residues long: MAREFSLEKTRNIGIMAHVDAGKTTTTERILYYTGKIHKIGETHEGASQMDWMEQEQERGITITSAATTAQWNNHRVNIIDTPGHVDFTIEVQRSLRVLDGAVTVLDSQSGVEPQTETVWRQATEYGVPRIVFANKMDKIGADFLYSVSTLHERLQANAHPIQLPIGSEDEFRGIIDLIKMKAEIYTNDLGTDILEEDIPAEYLEQAEEYREKLVEAVAETDEELMMKYLEGEEITNDELKAAIRKATINVEFFPVLCGSAFKNKGVQLMLDAVIDYLPSPLDIPAIKGVNPDTDAEEERHASDEEPFAALAFKIMTDPFVGRLTFFRVYSGVLNSGSYVLNTSKGKRERIGRILQMHANSRQEIETVYAGDIAAAVGLKDTTTGDSLTDEKAKIILESIHVPEPVIQLMVEPKSKADQDKMGIALSKLAEEDPTFRVETNVETGETVISGMGELHLDVLVDRMRREFKVEANVGAPQVSYRETFRASTQARGFFKRQSGGKGQFGDVWIEFTPNEEGKGFEFENAIVGGVVPREFIPAVEKGLVESMANGVLAGYPIVDVKAKLYDGSYHDVDSSETAFKVAASLALKEAAKSAQPTILEPMMLVTITAPEDNLGDVMGHVTARRGRVDGMEARGNTQIVRAYVPLAEMFGYATVLRSATQGRGTFMMVFDHYEDVPKSVQDEIIKKNGGNA.

In terms of domain architecture, tr-type G spans 8-282 (EKTRNIGIMA…AVIDYLPSPL (275 aa)). GTP contacts are provided by residues 17–24 (AHVDAGKT), 81–85 (DTPGH), and 135–138 (NKMD).

It belongs to the TRAFAC class translation factor GTPase superfamily. Classic translation factor GTPase family. EF-G/EF-2 subfamily.

The protein localises to the cytoplasm. Catalyzes the GTP-dependent ribosomal translocation step during translation elongation. During this step, the ribosome changes from the pre-translocational (PRE) to the post-translocational (POST) state as the newly formed A-site-bound peptidyl-tRNA and P-site-bound deacylated tRNA move to the P and E sites, respectively. Catalyzes the coordinated movement of the two tRNA molecules, the mRNA and conformational changes in the ribosome. This is Elongation factor G from Streptococcus suis (strain 05ZYH33).